We begin with the raw amino-acid sequence, 274 residues long: Hydroxyethylthiazole kinase (274 aa).

Met-54 provides a ligand contact to substrate. Residues Arg-129 and Thr-175 each contribute to the ATP site. Gly-202 is a binding site for substrate.

Belongs to the Thz kinase family. Requires Mg(2+) as cofactor.

It carries out the reaction 5-(2-hydroxyethyl)-4-methylthiazole + ATP = 4-methyl-5-(2-phosphooxyethyl)-thiazole + ADP + H(+). It participates in cofactor biosynthesis; thiamine diphosphate biosynthesis; 4-methyl-5-(2-phosphoethyl)-thiazole from 5-(2-hydroxyethyl)-4-methylthiazole: step 1/1. Its function is as follows. Catalyzes the phosphorylation of the hydroxyl group of 4-methyl-5-beta-hydroxyethylthiazole (THZ). This is Hydroxyethylthiazole kinase from Granulibacter bethesdensis (strain ATCC BAA-1260 / CGDNIH1).